We begin with the raw amino-acid sequence, 399 residues long: Formate-dependent phosphoribosylglycinamide formyltransferase (399 aa).

Residues 22-23 and Glu-82 contribute to the N(1)-(5-phospho-beta-D-ribosyl)glycinamide site; that span reads EL. Residues Arg-114, Lys-155, 160–165, 195–198, and Glu-203 each bind ATP; these read SSGKGQ and EKMI. An ATP-grasp domain is found at 119–308; that stretch reads RLAAETLHLL…EFALHVRAFL (190 aa). Glu-267 and Glu-279 together coordinate Mg(2+). N(1)-(5-phospho-beta-D-ribosyl)glycinamide-binding positions include Asp-286, Lys-355, and 362 to 363; that span reads RR.

The protein belongs to the PurK/PurT family. As to quaternary structure, homodimer.

It carries out the reaction N(1)-(5-phospho-beta-D-ribosyl)glycinamide + formate + ATP = N(2)-formyl-N(1)-(5-phospho-beta-D-ribosyl)glycinamide + ADP + phosphate + H(+). It functions in the pathway purine metabolism; IMP biosynthesis via de novo pathway; N(2)-formyl-N(1)-(5-phospho-D-ribosyl)glycinamide from N(1)-(5-phospho-D-ribosyl)glycinamide (formate route): step 1/1. Involved in the de novo purine biosynthesis. Catalyzes the transfer of formate to 5-phospho-ribosyl-glycinamide (GAR), producing 5-phospho-ribosyl-N-formylglycinamide (FGAR). Formate is provided by PurU via hydrolysis of 10-formyl-tetrahydrofolate. This Proteus mirabilis (strain HI4320) protein is Formate-dependent phosphoribosylglycinamide formyltransferase.